A 145-amino-acid chain; its full sequence is ATP synthase epsilon chain (145 aa).

The protein belongs to the ATPase epsilon chain family. As to quaternary structure, F-type ATPases have 2 components, CF(1) - the catalytic core - and CF(0) - the membrane proton channel. CF(1) has five subunits: alpha(3), beta(3), gamma(1), delta(1), epsilon(1). CF(0) has three main subunits: a, b and c.

It is found in the cell inner membrane. Produces ATP from ADP in the presence of a proton gradient across the membrane. The protein is ATP synthase epsilon chain of Francisella tularensis subsp. mediasiatica (strain FSC147).